Consider the following 572-residue polypeptide: DnaJ protein ERDJ3A (572 aa).

The signal sequence occupies residues 1-23 (MVRTRLAISVVLVSTLLLLNVKA). One can recognise a J domain in the interval 27–91 (DPYKVLGVSK…EKRKNYDLYG (65 aa)). Residues 394–423 (ITVKNLKSAVQELGKLLEGLEKKNKKVSSK) are a coiled coil. The interval 419-439 (KVSSKSQAGQAPNESSEKIPL) is disordered. Positions 422 to 432 (SKSQAGQAPNE) are enriched in polar residues. An N-linked (GlcNAc...) asparagine glycan is attached at Asn431.

Interacts with BIP1 and BIP3. The interaction with BIP1 and BIP3 activates the ATPase enzyme activities of BIP1 and BIP3. In terms of processing, not N-glycosylated. As to expression, expressed in roots, leaves, stems, flowers, mature pollen grains and growing pollen tubes.

The protein localises to the endoplasmic reticulum lumen. In terms of biological role, regulates protein folding in the endoplasmic reticulum (ER) lumen. Functions probably as a co-molecular chaperone that is required for normal growth of pollen tubes under high-temperature stress. This is DnaJ protein ERDJ3A (ERDJ3A) from Arabidopsis thaliana (Mouse-ear cress).